A 623-amino-acid chain; its full sequence is Activator of C kinase protein 1 (623 aa).

The segment at 141–230 (KESLGSPAVQ…GSSGGEDKLS (90 aa)) is disordered. A compositionally biased stretch (polar residues) spans 152–161 (ASISSGNRIS). Over residues 176-193 (SESRILQEKVYRTEEKAP) the composition is skewed to basic and acidic residues. Glycyl lysine isopeptide (Lys-Gly) (interchain with G-Cter in ubiquitin) cross-links involve residues K184 and K191. Polar residues predominate over residues 206 to 215 (KINQPPTGSA). Sel1-like repeat units lie at residues 318 to 361 (PPAM…KLNN), 408 to 444 (SACM…QKGD), 495 to 531 (PLAQ…AAQP), and 576 to 611 (ARTE…RMGF).

This Saccharomyces cerevisiae (strain ATCC 204508 / S288c) (Baker's yeast) protein is Activator of C kinase protein 1 (ACK1).